The following is a 249-amino-acid chain: Proteasome subunit alpha (249 aa).

It belongs to the peptidase T1A family. The 20S proteasome core is composed of 14 alpha and 14 beta subunits that assemble into four stacked heptameric rings, resulting in a barrel-shaped structure. The two inner rings, each composed of seven catalytic beta subunits, are sandwiched by two outer rings, each composed of seven alpha subunits. The catalytic chamber with the active sites is on the inside of the barrel. Has a gated structure, the ends of the cylinder being occluded by the N-termini of the alpha-subunits. Is capped at one or both ends by the proteasome regulatory ATPase, PAN.

The protein localises to the cytoplasm. The formation of the proteasomal ATPase PAN-20S proteasome complex, via the docking of the C-termini of PAN into the intersubunit pockets in the alpha-rings, triggers opening of the gate for substrate entry. Interconversion between the open-gate and close-gate conformations leads to a dynamic regulation of the 20S proteasome proteolysis activity. In terms of biological role, component of the proteasome core, a large protease complex with broad specificity involved in protein degradation. This Methanosarcina mazei (strain ATCC BAA-159 / DSM 3647 / Goe1 / Go1 / JCM 11833 / OCM 88) (Methanosarcina frisia) protein is Proteasome subunit alpha.